Consider the following 275-residue polypeptide: Polyamine aminopropyltransferase (275 aa).

A PABS domain is found at 2–235 (ELWFTEKQTK…GLWTFTIGSK (234 aa)). Q31 is an S-methyl-5'-thioadenosine binding site. Spermidine is bound by residues H62 and D86. Residues E106 and 137 to 138 (DG) each bind S-methyl-5'-thioadenosine. The active-site Proton acceptor is the D155. 155–158 (DSTE) contacts spermidine. P162 is an S-methyl-5'-thioadenosine binding site.

Belongs to the spermidine/spermine synthase family. In terms of assembly, homodimer or homotetramer.

Its subcellular location is the cytoplasm. The enzyme catalyses S-adenosyl 3-(methylsulfanyl)propylamine + putrescine = S-methyl-5'-thioadenosine + spermidine + H(+). It functions in the pathway amine and polyamine biosynthesis; spermidine biosynthesis; spermidine from putrescine: step 1/1. In terms of biological role, catalyzes the irreversible transfer of a propylamine group from the amino donor S-adenosylmethioninamine (decarboxy-AdoMet) to putrescine (1,4-diaminobutane) to yield spermidine. This chain is Polyamine aminopropyltransferase, found in Bacillus cereus (strain ATCC 10987 / NRS 248).